A 780-amino-acid polypeptide reads, in one-letter code: Potassium/sodium hyperpolarization-activated cyclic nucleotide-gated channel 3 (780 aa).

The disordered stretch occupies residues 1–47 (MEEEARPAVGDGEAATPARETPPAAPAQARAASGGVPESAPEPKRRQ). Residues 1–96 (MEEEARPAVG…PYSDFRFYWD (96 aa)) lie on the Cytoplasmic side of the membrane. Positions 13-32 (EAATPARETPPAAPAQARAA) are enriched in low complexity. The segment at 45–90 (RRQLGTLLQPTVNKFSLRVFGSHKAVEIEQERVKSAGAWIIHPYSD) is involved in subunit assembly. A helical transmembrane segment spans residues 97 to 117 (LIMLLLMVGNLIVLPVGITFF). Residues 118–123 (KEENSP) are Extracellular-facing. A helical membrane pass occupies residues 124–144 (PWIVFNVLSDTFFLLDLVLNF). Residues 145–170 (RTGIVVEEGAEILLAPRAIRTRYLRT) are Cytoplasmic-facing. A helical membrane pass occupies residues 171 to 191 (WFLVDLISSIPVDYIFLVVEL). Residues 192–200 (EPRLDAEVY) lie on the Extracellular side of the membrane. The helical; Voltage-sensor transmembrane segment at 201–221 (KTARALRIVRFTKILSLLRLL) threads the bilayer. At 222-252 (RLSRLIRYMHQWEEIFHMTYDLASAVVRIFN) the chain is on the cytoplasmic side. The chain crosses the membrane as a helical span at residues 253 to 273 (LIGMMLLLCHWDGCLQFLVPM). Residues 274–296 (LQDFPSDCWVSMNRMVNHSWGRQ) lie on the Extracellular side of the membrane. N-linked (GlcNAc...) asparagine glycosylation occurs at N290. The pore-forming intramembrane region spans 297 to 318 (YSHALFKAMSHMLCIGYGQQAP). The Extracellular segment spans residues 319–328 (VGMPDVWLTM). Residues 329-349 (LSMIVGATCYAMFIGHATALI) form a helical membrane-spanning segment. At 350–780 (QSLDSSRRQY…PRGPQISANM (431 aa)) the chain is on the cytoplasmic side. The segment at 353-780 (DSSRRQYQEK…PRGPQISANM (428 aa)) is interaction with KCTD3. G491, E492, C494, R501, T502, R542, and R545 together coordinate 3',5'-cyclic AMP. Residues 549-569 (KNSILQRKRSEPSPGSSSGGV) are disordered. Position 634 is a phosphoserine (S634). Positions 687–698 (ASLSRTGRSQVS) are enriched in polar residues. Residues 687 to 780 (ASLSRTGRSQ…PRGPQISANM (94 aa)) are disordered.

This sequence belongs to the potassium channel HCN family. Homotetramer. The potassium channel is composed of a homo- or heterotetrameric complex of pore-forming subunits. Interacts with HCN1. Interacts with KCTD3; this interaction increases cell surface expression and current density of this channel. Interacts with PEX5L.

The protein localises to the cell membrane. The enzyme catalyses K(+)(in) = K(+)(out). It catalyses the reaction Na(+)(in) = Na(+)(out). With respect to regulation, inhibited by Cs(1+) and ivabradine. Unlike HCN2 and HCN4, HCN3 is insensitive to cyclic nucleotides, such as cAMP or cGMP. This lack of sensitivity of HCN3, despite harboring a functional cyclic nucleotide-binding domain (CNBD), may be explained by its shorter C-terminal sequence, which may alter the normal autoinhibition of the channel. Phosphatidylinositol-4,5-bisphosphate (PIP(2)) shifts HCN3 activation to more depolarized potentials and accelerated activation kinetics. In terms of biological role, hyperpolarization-activated ion channel that are permeable to sodium and potassium ions, with an about 3:1 preference for potassium ions. Contributes to the native pacemaker currents in heart (If) and in neurons (Ih). In particular, plays a pivotal role in maintaining excitability and promoting rhythmic burst firing within hypothalamic nuclei. Exerts a significant influence on the configuration of the cardiac action potential waveform. Does not appear to play a prominent role in the processing of acute, neuropathic, or inflammatory pain. This chain is Potassium/sodium hyperpolarization-activated cyclic nucleotide-gated channel 3 (Hcn3), found in Rattus norvegicus (Rat).